We begin with the raw amino-acid sequence, 558 residues long: CTP synthase (558 aa).

Positions 1–267 (MAKFVFVTGG…CLEMLDVLNL (267 aa)) are amidoligase domain. Ser-13 lines the CTP pocket. Ser-13 serves as a coordination point for UTP. Residues 14 to 19 (SIGKGI) and Asp-71 each bind ATP. Mg(2+) contacts are provided by Asp-71 and Glu-141. Residues 148–150 (DIE), 188–193 (KTKPTQ), and Lys-224 each bind CTP. UTP is bound by residues 188-193 (KTKPTQ) and Lys-224. A Glutamine amidotransferase type-1 domain is found at 292–534 (KVALVGKYVQ…IEAAQLRLPA (243 aa)). Gly-354 provides a ligand contact to L-glutamine. The active-site Nucleophile; for glutamine hydrolysis is Cys-381. L-glutamine contacts are provided by residues 382 to 385 (LGMQ), Glu-405, and Arg-462. Catalysis depends on residues His-507 and Glu-509. The tract at residues 536 to 558 (PDEALRRQSQTNISAQEKPSRIG) is disordered. The span at 542 to 552 (RQSQTNISAQE) shows a compositional bias: polar residues.

It belongs to the CTP synthase family. In terms of assembly, homotetramer.

It carries out the reaction UTP + L-glutamine + ATP + H2O = CTP + L-glutamate + ADP + phosphate + 2 H(+). The catalysed reaction is L-glutamine + H2O = L-glutamate + NH4(+). The enzyme catalyses UTP + NH4(+) + ATP = CTP + ADP + phosphate + 2 H(+). It participates in pyrimidine metabolism; CTP biosynthesis via de novo pathway; CTP from UDP: step 2/2. With respect to regulation, allosterically activated by GTP, when glutamine is the substrate; GTP has no effect on the reaction when ammonia is the substrate. The allosteric effector GTP functions by stabilizing the protein conformation that binds the tetrahedral intermediate(s) formed during glutamine hydrolysis. Inhibited by the product CTP, via allosteric rather than competitive inhibition. Functionally, catalyzes the ATP-dependent amination of UTP to CTP with either L-glutamine or ammonia as the source of nitrogen. Regulates intracellular CTP levels through interactions with the four ribonucleotide triphosphates. This is CTP synthase from Prochlorococcus marinus (strain MIT 9303).